The sequence spans 202 residues: MTEPLIKMPKKSVKERQQQVLEVLIGLLNSEQGMQRVTTERLAKAVGVSEGALYRYFPSKSKMFEALIERIEQTLTSYINASKRKENSTALAVKAILYTVIEFARKNPGVTRILTGHALMFENSELKLRVAKFFDGLELQFVNILQMRKLREGKAFQDERALAGYLVTFCEGQFLRLVRSNFSSNPHQHFEKQWSLIKPLFE.

The HTH tetR-type domain maps to 14–75 (KERQQQVLEV…ALIERIEQTL (62 aa)). The segment at residues 38–57 (TTERLAKAVGVSEGALYRYF) is a DNA-binding region (H-T-H motif).

Belongs to the nucleoid occlusion factor SlmA family. In terms of assembly, homodimer. Interacts with FtsZ.

It is found in the cytoplasm. Its subcellular location is the nucleoid. Its function is as follows. Required for nucleoid occlusion (NO) phenomenon, which prevents Z-ring formation and cell division over the nucleoid. Acts as a DNA-associated cell division inhibitor that binds simultaneously chromosomal DNA and FtsZ, and disrupts the assembly of FtsZ polymers. SlmA-DNA-binding sequences (SBS) are dispersed on non-Ter regions of the chromosome, preventing FtsZ polymerization at these regions. This Haemophilus ducreyi (strain 35000HP / ATCC 700724) protein is Nucleoid occlusion factor SlmA.